The chain runs to 954 residues: Kinesin-like protein KIN-14A (954 aa).

Residues 24–142 (ALRRHQAATW…CVISLKSYHE (119 aa)) form the Calponin-homology (CH) domain. Positions 242–293 (LSRQLEKEQSSNSQVENRRRLLQAQESELLELKSMFQEVKIDFRTLKTQFQD) form a coiled coil. The 320-residue stretch at 332 to 651 (NIRVFCRIRP…LKFAQRASCV (320 aa)) folds into the Kinesin motor domain. Residue 413–420 (GQTGSGKT) coordinates ATP. The stretch at 656 to 692 (AHANKESNEIRELKEQVENLKRALAAKELEKSSFKLK) forms a coiled coil. A compositionally biased stretch (basic and acidic residues) spans 697-709 (VRERAKQVPERTP). Disordered regions lie at residues 697–743 (VRER…TKLN), 824–858 (NLEV…RKSI), and 882–954 (PAKI…KRWL). Composition is skewed to polar residues over residues 831 to 849 (DEPS…NATK) and 886 to 898 (ANST…SSIT).

The protein belongs to the TRAFAC class myosin-kinesin ATPase superfamily. Kinesin family. KIN-14 subfamily.

This is Kinesin-like protein KIN-14A from Oryza sativa subsp. japonica (Rice).